Reading from the N-terminus, the 35-residue chain is Photosystem II reaction center protein T (35 aa).

Residues 3-23 (ALVYTFLLVGTLGIIFFAIFF) traverse the membrane as a helical segment.

Belongs to the PsbT family. In terms of assembly, PSII is composed of 1 copy each of membrane proteins PsbA, PsbB, PsbC, PsbD, PsbE, PsbF, PsbH, PsbI, PsbJ, PsbK, PsbL, PsbM, PsbT, PsbY, PsbZ, Psb30/Ycf12, at least 3 peripheral proteins of the oxygen-evolving complex and a large number of cofactors. It forms dimeric complexes.

The protein localises to the plastid. It is found in the chloroplast thylakoid membrane. Its function is as follows. Found at the monomer-monomer interface of the photosystem II (PS II) dimer, plays a role in assembly and dimerization of PSII. PSII is a light-driven water plastoquinone oxidoreductase, using light energy to abstract electrons from H(2)O, generating a proton gradient subsequently used for ATP formation. The protein is Photosystem II reaction center protein T of Staurastrum punctulatum (Green alga).